The following is a 777-amino-acid chain: Zinc finger protein 786 (777 aa).

A KRAB domain is found at 9–80 (LTFEDVAIYF…WGEKKKPDKE (72 aa)). The C2H2-type 1; degenerate zinc-finger motif lies at 194–216 (NSCPVCRENSWEKNHLVKQQKGH). A C2H2-type 2 zinc finger spans residues 240 to 262 (ISCLGCGKSFRLKQYLVRHLDIH). A C2H2-type 3; degenerate zinc finger spans residues 268 to 291 (PQCPKCKMCFHHERTLFSHHLKNS). Residues 420–442 (VFCRKCGQGFTKHCGLTEHTRIL) form a C2H2-type 4; degenerate zinc finger. 11 consecutive C2H2-type zinc fingers follow at residues 448 to 470 (FWCA…QRLH), 476 to 498 (FQCT…QLQH), 504 to 526 (FSCS…LRVH), 532 to 554 (FQCP…QRIH), 560 to 582 (FSCG…FRVH), 588 to 610 (FQCP…QRLH), 616 to 638 (FQCP…QLLH), 644 to 665 (FSCQ…MRTH), 671 to 693 (FQCP…QGLH), 699 to 721 (FHCP…QRIH), and 727 to 749 (FACG…IRVH).

Belongs to the krueppel C2H2-type zinc-finger protein family.

It localises to the nucleus. In terms of biological role, may be involved in transcriptional regulation. This is Zinc finger protein 786 (Znf786) from Mus musculus (Mouse).